Reading from the N-terminus, the 453-residue chain is Chromosomal replication initiator protein DnaA (453 aa).

The tract at residues methionine 1–glutamine 79 is domain I, interacts with DnaA modulators. A domain II region spans residues glutamine 79–serine 111. Positions tyrosine 112–serine 330 are domain III, AAA+ region. ATP contacts are provided by glycine 156, glycine 158, lysine 159, and threonine 160. The segment at arginine 331–proline 453 is domain IV, binds dsDNA.

This sequence belongs to the DnaA family. Oligomerizes as a right-handed, spiral filament on DNA at oriC.

The protein resides in the cytoplasm. Its function is as follows. Plays an essential role in the initiation and regulation of chromosomal replication. ATP-DnaA binds to the origin of replication (oriC) to initiate formation of the DNA replication initiation complex once per cell cycle. Binds the DnaA box (a 9 base pair repeat at the origin) and separates the double-stranded (ds)DNA. Forms a right-handed helical filament on oriC DNA; dsDNA binds to the exterior of the filament while single-stranded (ss)DNA is stabiized in the filament's interior. The ATP-DnaA-oriC complex binds and stabilizes one strand of the AT-rich DNA unwinding element (DUE), permitting loading of DNA polymerase. After initiation quickly degrades to an ADP-DnaA complex that is not apt for DNA replication. Binds acidic phospholipids. The polypeptide is Chromosomal replication initiator protein DnaA (Lachnoclostridium phytofermentans (strain ATCC 700394 / DSM 18823 / ISDg) (Clostridium phytofermentans)).